Here is a 70-residue protein sequence, read N- to C-terminus: uncharacterized protein (70 aa).

The helical transmembrane segment at 50-70 (FYLLVFFIILWVSREAFFYLI) threads the bilayer.

The protein belongs to the M.jannaschii MJ0023/MJ0349/MJ1072/MJ1074/MJ1107/MJECL16 family.

The protein localises to the membrane. This is an uncharacterized protein from Methanocaldococcus jannaschii (strain ATCC 43067 / DSM 2661 / JAL-1 / JCM 10045 / NBRC 100440) (Methanococcus jannaschii).